A 938-amino-acid chain; its full sequence is ATP-dependent 6-phosphofructokinase subunit beta (938 aa).

The N-terminal catalytic PFK domain 1 stretch occupies residues 1–552 (MTQSLPLLNG…HLDNFMAINS (552 aa)). Residues Gly185, 249-250 (RC), and 279-282 (GDGS) each bind ATP. Asp280 contacts Mg(2+). Beta-D-fructose 6-phosphate is bound by residues 325–327 (SID), Arg362, 369–371 (MGR), Glu426, Arg454, and 460–463 (HVQR). The active-site Proton acceptor is Asp327. The segment at 553–566 (ADHIEPKLPEHTHM) is interdomain linker. The interval 567–938 (KIAIVNVGAP…ADHLVGRKKL (372 aa)) is C-terminal regulatory PFK domain 2. Beta-D-fructose 2,6-bisphosphate is bound by residues Arg637, 695–699 (TLSNN), Arg733, 740–742 (QGG), Lys826, 832–835 (HVQQ), and Arg915.

It belongs to the phosphofructokinase type A (PFKA) family. ATP-dependent PFK group I subfamily. Eukaryotic two domain clade 'E' sub-subfamily. Heterooctamer of 4 alpha and 4 beta chains. It depends on Mg(2+) as a cofactor.

It is found in the cytoplasm. It carries out the reaction beta-D-fructose 6-phosphate + ATP = beta-D-fructose 1,6-bisphosphate + ADP + H(+). The protein operates within carbohydrate degradation; glycolysis; D-glyceraldehyde 3-phosphate and glycerone phosphate from D-glucose: step 3/4. With respect to regulation, allosterically activated by ADP, AMP, or fructose 2,6-bisphosphate, and allosterically inhibited by ATP or citrate. Functionally, catalyzes the phosphorylation of D-fructose 6-phosphate to fructose 1,6-bisphosphate by ATP, the first committing step of glycolysis. This is ATP-dependent 6-phosphofructokinase subunit beta (PFK2) from Kluyveromyces lactis (strain ATCC 8585 / CBS 2359 / DSM 70799 / NBRC 1267 / NRRL Y-1140 / WM37) (Yeast).